The chain runs to 139 residues: MKLIAASLRRLSLAVLTVLLVVSSFAVFTPSAAAETYTVKLGSDKGLLVFEPAKLTIKPGDTVEFLNNKVPPHNVVFDATLNPAKSADLAKSLSHKQLLMSPGQSTSTTFPADAPAGDYSFYCEPHRGAGMVGKITVAS.

The signal sequence occupies residues 1–34 (MKLIAASLRRLSLAVLTVLLVVSSFAVFTPSAAA). Positions 35 to 135 (ETYTVKLGSD…HRGAGMVGKI (101 aa)) constitute a Plastocyanin-like domain. Cu cation-binding residues include histidine 73, cysteine 123, histidine 126, and methionine 131.

This sequence belongs to the plastocyanin family. The cofactor is Cu(2+).

It is found in the cellular thylakoid membrane. Participates in electron transfer between P700 and the cytochrome b6-f complex in photosystem I. This chain is Plastocyanin (petE), found in Trichormus variabilis (strain ATCC 29413 / PCC 7937) (Anabaena variabilis).